Reading from the N-terminus, the 186-residue chain is GMP synthase [glutamine-hydrolyzing] subunit A (186 aa).

Positions 2–186 constitute a Glutamine amidotransferase type-1 domain; sequence SIVIINNFGQ…ENFNKICENY (185 aa). The Nucleophile role is filled by C76. Residues H163 and E165 contribute to the active site.

In terms of assembly, heterodimer composed of a glutamine amidotransferase subunit (A) and a GMP-binding subunit (B).

The enzyme catalyses XMP + L-glutamine + ATP + H2O = GMP + L-glutamate + AMP + diphosphate + 2 H(+). It functions in the pathway purine metabolism; GMP biosynthesis; GMP from XMP (L-Gln route): step 1/1. Catalyzes the synthesis of GMP from XMP. The chain is GMP synthase [glutamine-hydrolyzing] subunit A from Methanosphaera stadtmanae (strain ATCC 43021 / DSM 3091 / JCM 11832 / MCB-3).